Here is a 686-residue protein sequence, read N- to C-terminus: Epsin (686 aa).

The region spanning D14–R145 is the ENTH domain. 2 disordered regions span residues Y177–N417 and N463–P571. The span at N185–R211 shows a compositional bias: polar residues. Basic and acidic residues predominate over residues E212–G225. Over residues S237–R256 the composition is skewed to polar residues. Low complexity-rich tracts occupy residues S269–S340 and N383–N417. Positions F491–D503 are enriched in polar residues. Residues G504 to F521 are compositionally biased toward basic and acidic residues. Low complexity predominate over residues G527–T547. Over residues P558–P567 the composition is skewed to polar residues.

Belongs to the epsin family.

Its subcellular location is the membrane. It localises to the clathrin-coated pit. Binds to membranes enriched in phosphatidylinositol 4,5-bisphosphate (PtdIns(4,5)P2). The protein is Epsin (epnA) of Dictyostelium discoideum (Social amoeba).